Consider the following 318-residue polypeptide: tRNA-cytidine(32) 2-sulfurtransferase (318 aa).

The interval 1 to 29 is disordered; the sequence is MNHVSSTKPDTAPSKHLTSSHIDATDQNN. Over residues 16 to 27 the composition is skewed to polar residues; it reads HLTSSHIDATDQ. The short motif at 64–69 is the PP-loop motif element; it reads SGGKDS. Residues C139, C142, and C230 each contribute to the [4Fe-4S] cluster site.

This sequence belongs to the TtcA family. Homodimer. Requires Mg(2+) as cofactor. The cofactor is [4Fe-4S] cluster.

The protein resides in the cytoplasm. The catalysed reaction is cytidine(32) in tRNA + S-sulfanyl-L-cysteinyl-[cysteine desulfurase] + AH2 + ATP = 2-thiocytidine(32) in tRNA + L-cysteinyl-[cysteine desulfurase] + A + AMP + diphosphate + H(+). The protein operates within tRNA modification. Functionally, catalyzes the ATP-dependent 2-thiolation of cytidine in position 32 of tRNA, to form 2-thiocytidine (s(2)C32). The sulfur atoms are provided by the cysteine/cysteine desulfurase (IscS) system. The polypeptide is tRNA-cytidine(32) 2-sulfurtransferase (Pseudoalteromonas atlantica (strain T6c / ATCC BAA-1087)).